We begin with the raw amino-acid sequence, 1358 residues long: Xanthine dehydrogenase (1358 aa).

Positions 18 to 107 constitute a 2Fe-2S ferredoxin-type domain; that stretch reads NQLLFFLNGE…GMAVTTIEGL (90 aa). Positions 56, 61, 64, 89, 129, 132, 164, and 166 each coordinate [2Fe-2S] cluster. One can recognise an FAD-binding PCMH-type domain in the interval 253-447; sequence FTGSRVTWYT…ESVFIPYTRP (195 aa). Residues 281 to 288, Phe-366, 376 to 380, Asp-389, Leu-437, and Lys-455 each bind FAD; these read IVVGNTEI and SIGGN. Residues Gln-805 and Phe-836 each coordinate Mo-molybdopterin. Positions 840 and 918 each coordinate substrate. Arg-950 is a Mo-molybdopterin binding site. Substrate is bound by residues Tyr-952 and Thr-1048. A Mo-molybdopterin-binding site is contributed by Ala-1117. Glu-1302 (proton acceptor) is an active-site residue.

It belongs to the xanthine dehydrogenase family. As to quaternary structure, homodimer. FAD serves as cofactor. Requires Mo-molybdopterin as cofactor. [2Fe-2S] cluster is required as a cofactor.

It is found in the peroxisome. The enzyme catalyses xanthine + NAD(+) + H2O = urate + NADH + H(+). It catalyses the reaction hypoxanthine + NAD(+) + H2O = xanthine + NADH + H(+). In terms of biological role, key enzyme in purine degradation. Catalyzes the oxidation of hypoxanthine to xanthine. Catalyzes the oxidation of xanthine to uric acid. In Dictyostelium discoideum (Social amoeba), this protein is Xanthine dehydrogenase (xdh).